The following is a 126-amino-acid chain: Fluoride-specific ion channel FluC (126 aa).

4 helical membrane passes run 5–25, 35–55, 68–88, and 99–119; these read LHFL…WLLG, WGTL…LGLI, ALVT…AEVV, and AAGY…LGLA. Na(+) contacts are provided by G75 and T78.

It belongs to the fluoride channel Fluc/FEX (TC 1.A.43) family.

It localises to the cell inner membrane. It carries out the reaction fluoride(in) = fluoride(out). With respect to regulation, na(+) is not transported, but it plays an essential structural role and its presence is essential for fluoride channel function. Fluoride-specific ion channel. Important for reducing fluoride concentration in the cell, thus reducing its toxicity. This is Fluoride-specific ion channel FluC from Bordetella avium (strain 197N).